A 695-amino-acid polypeptide reads, in one-letter code: MRVLGLFERGNNLNFADTYVYTWNKQYSFHENAFLISNQVATTIIIYLDKEIVNQVNEAFNLLNSNGIPALIIKSDHIGIFTSSNFTYDWQNKIIYFHEYTYYKNNEFIVSDEFWLNTSIQDLLPYKVLFFERGLRKLYEGEEYILYNTATDDDIIYKYIYEKDVIMSGNDYSKLYDTKSFKNFVHFMRLLRMRFAVPFDQLSNRVTRSRAFAKSKIHIGLRNESIPQALDNIHHYWINYSANGMRVSELKGSGSYSEKKISEFDIGQFKNYMNFLTLMFYIKNMKKKPSCTIIGAAPGYWIPSMKKYFNIVTYDDKHVDSTEHYNRYFTDDDIASVKTNGVYIDVRSDFKNYDWKKRRQLVEEETMRWLSITYKLLENRYVEAVLLKMTAMDIEIPDGYFVHFPTTYRKSEYYLLVDKQTVKRPKIKITKSLAYGAINTIFSDNVFISGKYSLKGKTEGVLALYCLSNTINPKEKVVQYANSFSGTCMTVRLNNTYILNKIIDFKTNADYTFLPSDFQCSIKTVLTSYRGYAGVFGYAITKDLKSDGNNHIYIIPNARDDDNFDTFASHLGLSRYSHSKRFSESATTMSGYLFRDMVSGKENMEDTDTENLASGHVFNAIAHYRFDYTYDIVGWLKLHKMRKFRVKSNIYGEHTDDEIRNAIEAAYVYYLLDGDEVGKEYAKRIMEIWDVQTWG.

Positions 187 to 255 (FMRLLRMRFA…RVSELKGSGS (69 aa)) are N7-methyltransferase activity. The interval 256-432 (YSEKKISEFD…KRPKIKITKS (177 aa)) is 2'-O-methyltransferase activity. Positions 433-559 (LAYGAINTIF…NHIYIIPNAR (127 aa)) are N7-methyltransferase activity. The interval 560–695 (DDDNFDTFAS…MEIWDVQTWG (136 aa)) is GTase/RTPase activity.

The protein belongs to the rotavirus VP3 family. As to quaternary structure, interacts with VP1. Interacts with VP2.

It is found in the virion. The enzyme catalyses a 5'-end diphospho-ribonucleoside in mRNA + GTP + H(+) = a 5'-end (5'-triphosphoguanosine)-ribonucleoside in mRNA + diphosphate. The catalysed reaction is a 5'-end (5'-triphosphoguanosine)-ribonucleoside in mRNA + S-adenosyl-L-methionine = a 5'-end (N(7)-methyl 5'-triphosphoguanosine)-ribonucleoside in mRNA + S-adenosyl-L-homocysteine. Its function is as follows. Multifunctional enzyme involved in mRNA capping. Catalyzes the formation of the 5' cap structure on the viral plus-strand transcripts. Specifically binds to GTP and displays guanylyltransferase and methyltransferase activities. Has affinity for ssRNA but not for dsRNA. Capping activity is non-specific and caps RNAs that initiate with either a G or an A residue. Together with VP1 polymerase, forms a VP1-VP3 complex positioned near the channels situated at each of the five-fold vertices of the core. Following infection, the outermost layer of the virus is lost, leaving a double-layered particle (DLP) made up of the core and VP6 shell. VP1 then catalyzes the transcription of fully conservative plus-strand genomic RNAs that are capped by VP3 and extruded through the DLP's channels into the cytoplasm where they function as mRNAs for translation of viral proteins. DLPs probably have an RNA triphosphatase activity as well, whereas open cores do not. In Rotavirus C (isolate RVC/Cow/Japan/Shintoku/1991/G2P[3]) (RV-C), this protein is Protein VP3.